Consider the following 967-residue polypeptide: A disintegrin and metalloproteinase with thrombospondin motifs 1 (967 aa).

Residues 1-54 (MQPEVPLGSGKLKPCSDMGDIQRAAKFRSSQSAHMLLLLLASITMLLCVRGAHG) form the signal peptide. The propeptide occupies 55-252 (RPTEEDEELV…TGPGSIRKKR (198 aa)). The tract at residues 198 to 252 (RGSGGAKCGVMDEETLPTSNSGRESQNTPDQWPLRNPTPQGAGKPTGPGSIRKKR) is disordered. A Cysteine switch motif is present at residues 203–210 (AKCGVMDE). C205 contacts Zn(2+). A compositionally biased stretch (polar residues) spans 213–227 (LPTSNSGRESQNTPD). In terms of domain architecture, Peptidase M12B spans 258–467 (RYVETMLVAD…GHGECLMDKP (210 aa)). Ca(2+)-binding residues include E261, D344, and D351. Intrachain disulfides connect C333–C385, C362–C367, C379–C462, and C417–C446. Residue H401 coordinates Zn(2+). E402 is an active-site residue. H405 and H411 together coordinate Zn(2+). The Ca(2+) site is built by C462 and D465. Residues 476–558 (DLPGTLYDAN…TDMKHFATPV (83 aa)) enclose the Disintegrin domain. Intrachain disulfides connect C488–C511, C499–C521, C506–C540, and C534–C545. N547 is a glycosylation site (N-linked (GlcNAc...) asparagine). The TSP type-1 1 domain maps to 559–614 (HGSWGPWGPWGDCSRTCGGGVQYTMRECDNPVPKNGGKYCEGKRVRYRSCNIEDCP). 3 cysteine pairs are disulfide-bonded: C571/C608, C575/C613, and C586/C598. N-linked (GlcNAc...) asparagine glycosylation is found at N720, N764, and N782. Residues 725-857 (KKISGTVTST…PFNAIPTFSE (133 aa)) are spacer. 2 consecutive TSP type-1 domains span residues 854 to 910 (TFSE…LPCP) and 911 to 967 (RWQV…TQCS). A glycan (N-linked (GlcNAc...) asparagine) is linked at N945.

It depends on Zn(2+) as a cofactor. Post-translationally, the precursor is cleaved by a furin endopeptidase. In terms of processing, glycosylated. Can be O-fucosylated by POFUT2 on a serine or a threonine residue found within the consensus sequence C1-X(2)-(S/T)-C2-G of the TSP type-1 repeat domains where C1 and C2 are the first and second cysteine residue of the repeat, respectively. Fucosylated repeats can then be further glycosylated by the addition of a beta-1,3-glucose residue by the glucosyltransferase, B3GALTL. Fucosylation mediates the efficient secretion of ADAMTS family members. Can also be C-glycosylated with one or two mannose molecules on tryptophan residues within the consensus sequence W-X-X-W of the TPRs, and N-glycosylated. These other glycosylations can also facilitate secretion.

It is found in the secreted. The protein localises to the extracellular space. The protein resides in the extracellular matrix. Metalloprotease which cleaves aggrecan, a cartilage proteoglycan, at the '1683-Glu-|-Leu-1684' site (within the chondroitin sulfate attachment domain), and may be involved in its turnover. Also cleaves COMP. Has angiogenic inhibitor activity. May play a critical role in follicular rupture. The sequence is that of A disintegrin and metalloproteinase with thrombospondin motifs 1 (Adamts1) from Rattus norvegicus (Rat).